We begin with the raw amino-acid sequence, 349 residues long: Phosphate carrier protein, mitochondrial (349 aa).

3 Solcar repeats span residues 47–131 (KYFA…FKVQ), 144–229 (YRTF…TVEL), and 246–324 (EQLV…VKVW). 6 helical membrane-spanning segments follow: residues 48–68 (YFAL…TAVV), 108–128 (APTF…YEVF), 147–167 (FVYL…LSPL), 207–227 (PLWG…EKTV), 248–268 (LVVT…VSHP), and 304–324 (IIMI…VKVW).

Belongs to the mitochondrial carrier (TC 2.A.29) family.

The protein localises to the mitochondrion inner membrane. Transport of phosphate groups from the cytosol to the mitochondrial matrix. This Choristoneura fumiferana (Spruce budworm moth) protein is Phosphate carrier protein, mitochondrial.